We begin with the raw amino-acid sequence, 202 residues long: Na(+)-translocating NADH-quinone reductase subunit E (202 aa).

A run of 6 helical transmembrane segments spans residues 11–31 (SVFI…FLAM), 35–55 (INAA…TVPA), 81–101 (FLSF…MEMV), 114–134 (GVFL…LFMV), 144–164 (VVYG…LAGI), and 180–200 (LGIT…FGGI).

The protein belongs to the NqrDE/RnfAE family. As to quaternary structure, composed of six subunits; NqrA, NqrB, NqrC, NqrD, NqrE and NqrF.

The protein resides in the cell inner membrane. The catalysed reaction is a ubiquinone + n Na(+)(in) + NADH + H(+) = a ubiquinol + n Na(+)(out) + NAD(+). In terms of biological role, NQR complex catalyzes the reduction of ubiquinone-1 to ubiquinol by two successive reactions, coupled with the transport of Na(+) ions from the cytoplasm to the periplasm. NqrA to NqrE are probably involved in the second step, the conversion of ubisemiquinone to ubiquinol. This chain is Na(+)-translocating NADH-quinone reductase subunit E, found in Cellvibrio japonicus (strain Ueda107) (Pseudomonas fluorescens subsp. cellulosa).